The primary structure comprises 456 residues: Bifunctional protein GlmU (456 aa).

Positions 1 to 229 (MSNRPMSVVI…TTETDGVNNR (229 aa)) are pyrophosphorylase. UDP-N-acetyl-alpha-D-glucosamine contacts are provided by residues 11 to 14 (LAAG), Lys-25, Gln-76, 81 to 82 (GT), 103 to 105 (YGD), Gly-140, Glu-154, Asn-169, and Asn-227. Asp-105 serves as a coordination point for Mg(2+). Asn-227 contacts Mg(2+). A linker region spans residues 230-250 (LQLATLERVYQAEQAEKLLLS). An N-acetyltransferase region spans residues 251–456 (GVMLQDPARF…ASWQRPQKKK (206 aa)). UDP-N-acetyl-alpha-D-glucosamine-binding residues include Arg-333 and Lys-351. Catalysis depends on His-363, which acts as the Proton acceptor. Positions 366 and 377 each coordinate UDP-N-acetyl-alpha-D-glucosamine. Acetyl-CoA-binding positions include Ala-380, 386 to 387 (NY), Ser-405, Ala-423, and Arg-440.

It in the N-terminal section; belongs to the N-acetylglucosamine-1-phosphate uridyltransferase family. This sequence in the C-terminal section; belongs to the transferase hexapeptide repeat family. In terms of assembly, homotrimer. Requires Mg(2+) as cofactor.

It localises to the cytoplasm. It catalyses the reaction alpha-D-glucosamine 1-phosphate + acetyl-CoA = N-acetyl-alpha-D-glucosamine 1-phosphate + CoA + H(+). It carries out the reaction N-acetyl-alpha-D-glucosamine 1-phosphate + UTP + H(+) = UDP-N-acetyl-alpha-D-glucosamine + diphosphate. The protein operates within nucleotide-sugar biosynthesis; UDP-N-acetyl-alpha-D-glucosamine biosynthesis; N-acetyl-alpha-D-glucosamine 1-phosphate from alpha-D-glucosamine 6-phosphate (route II): step 2/2. Its pathway is nucleotide-sugar biosynthesis; UDP-N-acetyl-alpha-D-glucosamine biosynthesis; UDP-N-acetyl-alpha-D-glucosamine from N-acetyl-alpha-D-glucosamine 1-phosphate: step 1/1. It functions in the pathway bacterial outer membrane biogenesis; LPS lipid A biosynthesis. Catalyzes the last two sequential reactions in the de novo biosynthetic pathway for UDP-N-acetylglucosamine (UDP-GlcNAc). The C-terminal domain catalyzes the transfer of acetyl group from acetyl coenzyme A to glucosamine-1-phosphate (GlcN-1-P) to produce N-acetylglucosamine-1-phosphate (GlcNAc-1-P), which is converted into UDP-GlcNAc by the transfer of uridine 5-monophosphate (from uridine 5-triphosphate), a reaction catalyzed by the N-terminal domain. The chain is Bifunctional protein GlmU from Erwinia tasmaniensis (strain DSM 17950 / CFBP 7177 / CIP 109463 / NCPPB 4357 / Et1/99).